We begin with the raw amino-acid sequence, 254 residues long: Ribonuclease HII (254 aa).

In terms of domain architecture, RNase H type-2 spans 70–254 (QAIAGIDEVG…TFEPVKSMLG (185 aa)). A divalent metal cation contacts are provided by Asp76, Glu77, and Asp168.

The protein belongs to the RNase HII family. Mn(2+) serves as cofactor. The cofactor is Mg(2+).

It localises to the cytoplasm. The enzyme catalyses Endonucleolytic cleavage to 5'-phosphomonoester.. Endonuclease that specifically degrades the RNA of RNA-DNA hybrids. This Streptococcus gordonii (strain Challis / ATCC 35105 / BCRC 15272 / CH1 / DL1 / V288) protein is Ribonuclease HII.